Here is a 262-residue protein sequence, read N- to C-terminus: Small ribosomal subunit protein eS4 (262 aa).

An S4 RNA-binding domain is found at 42 to 105 (LPLIIMLRNR…GEFFRLLYDV (64 aa)).

It belongs to the eukaryotic ribosomal protein eS4 family.

The polypeptide is Small ribosomal subunit protein eS4 (RpS4) (Ixodes scapularis (Black-legged tick)).